We begin with the raw amino-acid sequence, 359 residues long: Aspartate carbamoyltransferase catalytic subunit (359 aa).

Arginine 52 and threonine 53 together coordinate carbamoyl phosphate. Lysine 81 contributes to the L-aspartate binding site. 3 residues coordinate carbamoyl phosphate: arginine 102, histidine 130, and glutamine 133. Residues arginine 163 and arginine 224 each contribute to the L-aspartate site. The carbamoyl phosphate site is built by leucine 264 and proline 265.

The protein belongs to the aspartate/ornithine carbamoyltransferase superfamily. ATCase family. In terms of assembly, heterododecamer (2C3:3R2) of six catalytic PyrB chains organized as two trimers (C3), and six regulatory PyrI chains organized as three dimers (R2).

It catalyses the reaction carbamoyl phosphate + L-aspartate = N-carbamoyl-L-aspartate + phosphate + H(+). It functions in the pathway pyrimidine metabolism; UMP biosynthesis via de novo pathway; (S)-dihydroorotate from bicarbonate: step 2/3. Catalyzes the condensation of carbamoyl phosphate and aspartate to form carbamoyl aspartate and inorganic phosphate, the committed step in the de novo pyrimidine nucleotide biosynthesis pathway. This Brachyspira hyodysenteriae (strain ATCC 49526 / WA1) protein is Aspartate carbamoyltransferase catalytic subunit.